A 328-amino-acid polypeptide reads, in one-letter code: Putative tyrosine-protein kinase C03B1.5 (328 aa).

A Protein kinase domain is found at 25–288 (WSPALKIGSG…ALHASSQTYL (264 aa)). Residues 31 to 39 (IGSGAFGEV) and K62 contribute to the ATP site. The active-site Proton acceptor is the D155.

It belongs to the protein kinase superfamily. Tyr protein kinase family.

The enzyme catalyses L-tyrosyl-[protein] + ATP = O-phospho-L-tyrosyl-[protein] + ADP + H(+). This is Putative tyrosine-protein kinase C03B1.5 from Caenorhabditis elegans.